The following is a 366-amino-acid chain: Phospho-N-acetylmuramoyl-pentapeptide-transferase (366 aa).

Transmembrane regions (helical) follow at residues 27-47, 71-91, 93-113, 134-154, 174-194, 205-225, 245-265, 268-288, 294-314, and 343-363; these read AAMF…IASL, TPTM…LLWA, LSNV…AIGF, LAIE…AAKI, ALLN…VSAG, GLAI…AYLA, LAVI…FNAP, AIFM…TVAV, IVMV…IIQV, and QVVI…LATL.

Belongs to the glycosyltransferase 4 family. MraY subfamily. Mg(2+) serves as cofactor.

The protein resides in the cell inner membrane. The enzyme catalyses UDP-N-acetyl-alpha-D-muramoyl-L-alanyl-gamma-D-glutamyl-meso-2,6-diaminopimeloyl-D-alanyl-D-alanine + di-trans,octa-cis-undecaprenyl phosphate = di-trans,octa-cis-undecaprenyl diphospho-N-acetyl-alpha-D-muramoyl-L-alanyl-D-glutamyl-meso-2,6-diaminopimeloyl-D-alanyl-D-alanine + UMP. It functions in the pathway cell wall biogenesis; peptidoglycan biosynthesis. In terms of biological role, catalyzes the initial step of the lipid cycle reactions in the biosynthesis of the cell wall peptidoglycan: transfers peptidoglycan precursor phospho-MurNAc-pentapeptide from UDP-MurNAc-pentapeptide onto the lipid carrier undecaprenyl phosphate, yielding undecaprenyl-pyrophosphoryl-MurNAc-pentapeptide, known as lipid I. The polypeptide is Phospho-N-acetylmuramoyl-pentapeptide-transferase (Allorhizobium ampelinum (strain ATCC BAA-846 / DSM 112012 / S4) (Agrobacterium vitis (strain S4))).